The chain runs to 486 residues: ATP-dependent 6-phosphofructokinase (486 aa).

ATP-binding positions include G105, 171–172, and 196–199; these read RG and GDGT. Residue D197 participates in Mg(2+) binding. Residues 225-227, 270-272, E323, and 378-381 contribute to the substrate site; these read TID, MGR, and YMIR. Catalysis depends on D227, which acts as the Proton acceptor. The Peroxisomal targeting signal motif lies at 484-486; it reads SKV.

This sequence belongs to the phosphofructokinase type A (PFKA) family. PPi-dependent PFK group II subfamily. Atypical ATP-dependent clade 'X' sub-subfamily. As to quaternary structure, homotetramer. Requires Mg(2+) as cofactor.

It is found in the glycosome. The enzyme catalyses beta-D-fructose 6-phosphate + ATP = beta-D-fructose 1,6-bisphosphate + ADP + H(+). The protein operates within carbohydrate degradation; glycolysis; D-glyceraldehyde 3-phosphate and glycerone phosphate from D-glucose: step 3/4. With respect to regulation, allosterically activated by AMP. In terms of biological role, catalyzes the phosphorylation of D-fructose 6-phosphate to fructose 1,6-bisphosphate by ATP, the first committing step of glycolysis. The protein is ATP-dependent 6-phosphofructokinase of Leishmania donovani.